The chain runs to 288 residues: Aquaporin NIP2-1 (288 aa).

N-acetylmethionine is present on methionine 1. The next 2 membrane-spanning stretches (helical) occupy residues 50 to 70 (LLAELVGTYYLIFAGCAAIAV) and 77 to 97 (VVTLVGIAVVWGIVIMVLVYC). Residues 106–108 (NPA) carry the NPA 1 motif. 3 consecutive transmembrane segments (helical) span residues 126 to 146 (AYITVQVIGSTLASATLRLLF), 170 to 190 (LQAFVMEFIITGFLMLVVCAV), and 202 to 222 (GLIIGATVTLNVIFAGEVSGA). Positions 225–227 (NPA) match the NPA 2 motif. The helical transmembrane segment at 234–254 (LVWGCYKGIWIYLLAPTLGAV) threads the bilayer. Serine 278 is subject to Phosphoserine.

It belongs to the MIP/aquaporin (TC 1.A.8) family. NIP (TC 1.A.8.12) subfamily. As to expression, specifically expressed in roots with high expression in root elongation zone and root stele.

Its subcellular location is the endoplasmic reticulum membrane. In terms of biological role, low water transport activity in yeast cells. This Arabidopsis thaliana (Mouse-ear cress) protein is Aquaporin NIP2-1 (NIP2-1).